The following is a 122-amino-acid chain: Large ribosomal subunit protein uL14 (122 aa).

Belongs to the universal ribosomal protein uL14 family. As to quaternary structure, part of the 50S ribosomal subunit. Forms a cluster with proteins L3 and L19. In the 70S ribosome, L14 and L19 interact and together make contacts with the 16S rRNA in bridges B5 and B8.

In terms of biological role, binds to 23S rRNA. Forms part of two intersubunit bridges in the 70S ribosome. The protein is Large ribosomal subunit protein uL14 of Flavobacterium psychrophilum (strain ATCC 49511 / DSM 21280 / CIP 103535 / JIP02/86).